The chain runs to 718 residues: Sodium/myo-inositol cotransporter (718 aa).

The Extracellular portion of the chain corresponds to 1–9 (MRAVLETAD). Residues 10 to 29 (IAIVALYFILVMCIGFFAMW) traverse the membrane as a helical segment. The Cytoplasmic portion of the chain corresponds to 30–38 (KSNRSTVSG). A helical membrane pass occupies residues 39 to 57 (YFLAGRSMTWVAIGASLFV). At 58 to 86 (SNIGSEHFIGLAGSGAASGFAVGAWEFNA) the chain is on the extracellular side. Residues 87-110 (LLLLQLLGWVFIPIYIRSGVYTMP) form a helical membrane-spanning segment. At 111–123 (EYLSKRFGGHRIQ) the chain is on the cytoplasmic side. Residues 124-144 (VYFAALSLILYIFTKLSVDLY) form a helical membrane-spanning segment. Residues 145–157 (SGALFIQESMGWN) lie on the Extracellular side of the membrane. A helical membrane pass occupies residues 158–183 (LYVSVILLIGMTALLTVTGGLVAVIY). Topologically, residues 184-186 (TDT) are cytoplasmic. The chain crosses the membrane as a helical span at residues 187–205 (LQALLMIVGALTLMVISMM). At 206 to 303 (EIGGFEEVKR…HAKGSTLMAG (98 aa)) the chain is on the extracellular side. An N-linked (GlcNAc...) asparagine glycan is attached at N232. Residues 304–324 (FLKLLPMFIIVVPGMISRILF) traverse the membrane as a helical segment. Topologically, residues 325-353 (ADDIACINPEHCMQVCGSRAGCSNIAYPR) are cytoplasmic. Residues 354–376 (LVMKLVPVGLRGLMMAVMIAALM) form a helical membrane-spanning segment. Topologically, residues 377–406 (SDLDSIFNSASTIFTLDVYKLIRKSASSRE) are extracellular. Residues 407-430 (LMIVGRIFVAFMVVISIAWVPIIV) traverse the membrane as a helical segment. The Cytoplasmic segment spans residues 431-443 (EMQGGQMYLYIQE). The chain crosses the membrane as a helical span at residues 444-462 (VADYLTPPVAALFLLAIFW). The Extracellular segment spans residues 463–510 (KRCNEQGAFYGGMAGFILVVVRLTLAFAYRAPECDQPDNRPVFIKDIH). A helical transmembrane segment spans residues 511 to 532 (YMYVATALFWITGLITVIVSLL). Topologically, residues 533-695 (TPPPTKEQIR…QMLEEPPQVK (163 aa)) are cytoplasmic. Residues S594 and S632 each carry the phosphoserine modification. The helical transmembrane segment at 696 to 716 (VILNIGLFGVCSLGIFMFVYF) threads the bilayer. The Extracellular segment spans residues 717-718 (SL).

Belongs to the sodium:solute symporter (SSF) (TC 2.A.21) family. Interacts with KCNQ2 (via the pore module). Interacts with KCNQ1; this interaction is direct. Forms coregulatory complexes with ion channels KCNQ2-KCNQ3 and KCNQ1-KCNE2.

It is found in the apical cell membrane. The protein localises to the basolateral cell membrane. In terms of biological role, electrogenic Na(+)-coupled sugar symporter that actively transports myo-inositol and its stereoisomer scyllo-inositol across the plasma membrane, with a Na(+) to sugar coupling ratio of 2:1. Maintains myo-inositol concentration gradient that defines cell volume and fluid balance during osmotic stress, in particular in the fetoplacental unit and central nervous system. Forms coregulatory complexes with voltage-gated K(+) ion channels, allosterically altering ion selectivity, voltage dependence and gating kinetics of the channel. In turn, K(+) efflux through the channel forms a local electrical gradient that modulates electrogenic Na(+)-coupled myo-inositol influx through the transporter. Associates with KCNQ1-KCNE2 channel in the apical membrane of choroid plexus epithelium and regulates the myo-inositol gradient between blood and cerebrospinal fluid with an impact on neuron excitability. Associates with KCNQ2-KCNQ3 channel altering ion selectivity, increasing Na(+) and Cs(+) permeation relative to K(+) permeation. Provides myo-inositol precursor for biosynthesis of phosphoinositides such as PI(4,5)P2, thus indirectly affecting the activity of phosphoinositide-dependent ion channels and Ca(2+) signaling upon osmotic stress. This chain is Sodium/myo-inositol cotransporter (SLC5A3), found in Bos taurus (Bovine).